Here is a 108-residue protein sequence, read N- to C-terminus: MFKGGMGNMMRQAQQMQENMQKAQEEIANMEVEGQAGAGLVKILMTGRHDVKRVSIDDSLFGDDKEMLEDLIAAAVNDAVRNIEVTQKEKMAAATAGMSLPPGFKMPF.

The tract at residues 1-22 (MFKGGMGNMMRQAQQMQENMQK) is disordered. Polar residues predominate over residues 11 to 22 (RQAQQMQENMQK).

Belongs to the YbaB/EbfC family. As to quaternary structure, homodimer.

It is found in the cytoplasm. It localises to the nucleoid. Its function is as follows. Binds to DNA and alters its conformation. May be involved in regulation of gene expression, nucleoid organization and DNA protection. The sequence is that of Nucleoid-associated protein Mmwyl1_2533 from Marinomonas sp. (strain MWYL1).